A 180-amino-acid chain; its full sequence is Crossover junction endodeoxyribonuclease RuvC (180 aa).

Residues aspartate 13, glutamate 73, and aspartate 145 contribute to the active site. 3 residues coordinate Mg(2+): aspartate 13, glutamate 73, and aspartate 145.

This sequence belongs to the RuvC family. As to quaternary structure, homodimer which binds Holliday junction (HJ) DNA. The HJ becomes 2-fold symmetrical on binding to RuvC with unstacked arms; it has a different conformation from HJ DNA in complex with RuvA. In the full resolvosome a probable DNA-RuvA(4)-RuvB(12)-RuvC(2) complex forms which resolves the HJ. The cofactor is Mg(2+).

Its subcellular location is the cytoplasm. It carries out the reaction Endonucleolytic cleavage at a junction such as a reciprocal single-stranded crossover between two homologous DNA duplexes (Holliday junction).. In terms of biological role, the RuvA-RuvB-RuvC complex processes Holliday junction (HJ) DNA during genetic recombination and DNA repair. Endonuclease that resolves HJ intermediates. Cleaves cruciform DNA by making single-stranded nicks across the HJ at symmetrical positions within the homologous arms, yielding a 5'-phosphate and a 3'-hydroxyl group; requires a central core of homology in the junction. The consensus cleavage sequence is 5'-(A/T)TT(C/G)-3'. Cleavage occurs on the 3'-side of the TT dinucleotide at the point of strand exchange. HJ branch migration catalyzed by RuvA-RuvB allows RuvC to scan DNA until it finds its consensus sequence, where it cleaves and resolves the cruciform DNA. The polypeptide is Crossover junction endodeoxyribonuclease RuvC (Magnetococcus marinus (strain ATCC BAA-1437 / JCM 17883 / MC-1)).